A 1584-amino-acid polypeptide reads, in one-letter code: MSKQVSLPEMIKDWTKEHVKKWVNEDLKINEQYGQILLSEEVTGLVLQELTEKDLVEMGLPWGPALLIKRSYNKLNSKSPESDNHDPGQLDNSKPSKTEHQKNPKHTKKEEENSMSSNIDYDPREIRDIKQEESILMKENVLDEVANAKHKKKGKLKPEQLTCMPYPFDQFHDSHRYIEHYTLQPETGALNLIDPIHEFKALTNTETATEVDIKMKFSNEVFRFASACMNSRTNGTIHFGVKDKPHGEIVGVKITSKAAFIDHFNVMIKKYFEESEINEAKKCIREPRFVEVLLQNNTPSDRFVIEVDTIPKHSICNDKYFYIQMQICKDKIWKQNQNLSLFVREGASSRDILANSKQRDVDFKAFLQNLKSLVASRKEAEEEYGMKAMKKESEGLKLVKLLIGNRDSLDNSYYDWYILVTNKCHPNQIKHLDFLKEIKWFAVLEFDPESMINGVVKAYKESRVANLHFPNQYEDKTTNMWEKISTLNLYQQPSWIFCNGRSDLKSETYKPLEPHLWQRERASEVRKLILFLTDENIMTRGKFLVVFLLLSSVESPGDPLIETFWAFYQALKGMENMLCISVNSHIYQRWKDLLQTRMKMEDELTNHSISTLNIELVNSTILKLKSVTRSSRRFLPARGSSSVILEKKKEDVLTALEILCENECTETDIEKDKSKFLEFKKSKEEHFYRGGKVSWWNFYFSSENYSSDFVKRDSYEKLKDLIHCWAESPKPIFAKIINLYHHPGCGGTTLAMHVLWDLKKNFRCAVLKNKTTDFAEIAEQVINLVTYRAKSHQDYIPVLLLVDDFEEQENVYFLQNAIHSVLAEKDLRYEKTLVIILNCMRSRNPDESAKLADSIALNYQLSSKEQRAFGAKLKEIEKQHKNCENFYSFMIMKSNFDETYIENVVRNILKGQDVDSKEAQLISFLALLSSYVTDSTISVSQCEIFLGIIYTSTPWEPESLEDKMGTYSTLLIKTEVAEYGRYTGVRIIHPLIALYCLKELERSYHLDKCQIALNILEENLFYDSGIGRDKFQHDVQTLLLTRQRKVYGDETDTLFSPLMEALQNKDIEKVLSAGSRRFPQNAFICQALARHFYIKEKDFNTALDWARQAKMKAPKNSYISDTLGQVYKSEIKWWLDGNKNCRSITVNDLTHLLEAAEKASRAFKESQRQTDSKNYETENWSPQKSQRRYDMYNTACFLGEIEVGLYTIQILQLTPFFHKENELSKKHMVQFLSGKWTIPPDPRNECYLALSKFTSHLKNLQSDLKRCFDFFIDYMVLLKMRYTQKEIAEIMLSKKVSRCFRKYTELFCHLDPCLLQSKESQLLQEENCRKKLEALRADRFAGLLEYLNPNYKDATTMESIVNEYAFLLQQNSKKPMTNEKQNSILANIILSCLKPNSKLIQPLTTLKKQLREVLQFVGLSHQYPGPYFLACLLFWPENQELDQDSKLIEKYVSSLNRSFRGQYKRMCRSKQASTLFYLGKRKGLNSIVHKAKIEQYFDKAQNTNSLWHSGDVWKKNEVKDLLRRLTGQAEGKLISVEYGTEEKIKIPVISVYSGPLRSGRNIERVSFYLGFSIEGPLAYDIEVI.

The region spanning 14 to 79 (WTKEHVKKWV…RSYNKLNSKS (66 aa)) is the SAM domain. The disordered stretch occupies residues 76–122 (NSKSPESDNHDPGQLDNSKPSKTEHQKNPKHTKKEEENSMSSNIDYD). The span at 80–112 (PESDNHDPGQLDNSKPSKTEHQKNPKHTKKEEE) shows a compositional bias: basic and acidic residues.

In terms of assembly, interacts with EEA1. In terms of tissue distribution, widely expressed in adult and fetal tissues. Expressed in the cerebellum. Variable expression in tumors. Down-regulated in breast cancer.

It localises to the early endosome. The protein localises to the mitochondrion. Its function is as follows. May be involved in endosome fusion. Mediates down-regulation of growth factor signaling via internalization of growth factor receptors. In Homo sapiens (Human), this protein is Sterile alpha motif domain-containing protein 9-like (SAMD9L).